Reading from the N-terminus, the 145-residue chain is D-aminoacyl-tRNA deacylase (145 aa).

The Gly-cisPro motif, important for rejection of L-amino acids signature appears at Gly-137–Pro-138.

It belongs to the DTD family. In terms of assembly, homodimer.

It localises to the cytoplasm. The enzyme catalyses glycyl-tRNA(Ala) + H2O = tRNA(Ala) + glycine + H(+). It carries out the reaction a D-aminoacyl-tRNA + H2O = a tRNA + a D-alpha-amino acid + H(+). An aminoacyl-tRNA editing enzyme that deacylates mischarged D-aminoacyl-tRNAs. Also deacylates mischarged glycyl-tRNA(Ala), protecting cells against glycine mischarging by AlaRS. Acts via tRNA-based rather than protein-based catalysis; rejects L-amino acids rather than detecting D-amino acids in the active site. By recycling D-aminoacyl-tRNA to D-amino acids and free tRNA molecules, this enzyme counteracts the toxicity associated with the formation of D-aminoacyl-tRNA entities in vivo and helps enforce protein L-homochirality. In Salmonella paratyphi C (strain RKS4594), this protein is D-aminoacyl-tRNA deacylase.